The following is a 501-amino-acid chain: Putative ribose/galactose/methyl galactoside import ATP-binding protein 1 (501 aa).

ABC transporter domains lie at 5 to 237 and 249 to 492; these read VSLS…VGRQ and VPGE…MTRS. 37–44 contacts ATP; it reads GENGAGKS.

The protein belongs to the ABC transporter superfamily. Carbohydrate importer 2 (CUT2) (TC 3.A.1.2) family.

The protein resides in the cell inner membrane. It carries out the reaction D-ribose(out) + ATP + H2O = D-ribose(in) + ADP + phosphate + H(+). It catalyses the reaction D-galactose(out) + ATP + H2O = D-galactose(in) + ADP + phosphate + H(+). In terms of biological role, part of an ABC transporter complex involved in carbohydrate import. Could be involved in ribose, galactose and/or methyl galactoside import. Responsible for energy coupling to the transport system. This is Putative ribose/galactose/methyl galactoside import ATP-binding protein 1 from Rhizobium meliloti (strain 1021) (Ensifer meliloti).